A 182-amino-acid chain; its full sequence is Peptidoglycan-recognition protein SB2 (182 aa).

Positions 1–17 are cleaved as a signal peptide; sequence MKLQLALVLCGLTLALG. The region spanning 40 to 165 is the N-acetylmuramoyl-L-alanine amidase domain; it reads PVRLIIIHHT…CQTKATACPG (126 aa). H47 is a binding site for Zn(2+). An intrachain disulfide couples C54 to C60. N149 carries N-linked (GlcNAc...) asparagine glycosylation. Residues H155 and C163 each contribute to the Zn(2+) site.

The protein belongs to the N-acetylmuramoyl-L-alanine amidase 2 family. Requires Zn(2+) as cofactor.

Its subcellular location is the secreted. It catalyses the reaction Hydrolyzes the link between N-acetylmuramoyl residues and L-amino acid residues in certain cell-wall glycopeptides.. In terms of biological role, N-acetylmuramyl-L-alanine amidase involved in innate immunity by degrading bacterial peptidoglycans (PGN). Probably plays a scavenger role by digesting biologically active PGN into biologically inactive fragments. Has no direct bacteriolytic activity. The polypeptide is Peptidoglycan-recognition protein SB2 (PGRP-SB2) (Drosophila simulans (Fruit fly)).